The following is a 429-amino-acid chain: Adenylosuccinate synthetase (429 aa).

GTP-binding positions include 12–18 and 40–42; these read GDEGKGK and GHT. The active-site Proton acceptor is Asp13. Residues Asp13 and Gly40 each coordinate Mg(2+). IMP contacts are provided by residues 13-16, 38-41, Thr128, Arg142, Gln223, Thr238, and Arg302; these read DEGK and NAGH. Residue His41 is the Proton donor of the active site. Position 298 to 304 (298 to 304) interacts with substrate; the sequence is VNTGRPR. GTP-binding positions include Arg304, 330–332, and 412–414; these read KLD and GVG.

This sequence belongs to the adenylosuccinate synthetase family. In terms of assembly, homodimer. Requires Mg(2+) as cofactor.

The protein resides in the cytoplasm. It carries out the reaction IMP + L-aspartate + GTP = N(6)-(1,2-dicarboxyethyl)-AMP + GDP + phosphate + 2 H(+). It participates in purine metabolism; AMP biosynthesis via de novo pathway; AMP from IMP: step 1/2. Its function is as follows. Plays an important role in the de novo pathway of purine nucleotide biosynthesis. Catalyzes the first committed step in the biosynthesis of AMP from IMP. This Pseudarthrobacter chlorophenolicus (strain ATCC 700700 / DSM 12829 / CIP 107037 / JCM 12360 / KCTC 9906 / NCIMB 13794 / A6) (Arthrobacter chlorophenolicus) protein is Adenylosuccinate synthetase.